Consider the following 847-residue polypeptide: Alpha-glucuronidase (847 aa).

The N-terminal stretch at 1-19 (MVIRSLLLLLLAAIVPVFA) is a signal peptide. Asparagine 52, asparagine 238, asparagine 321, asparagine 353, asparagine 586, asparagine 692, asparagine 740, and asparagine 767 each carry an N-linked (GlcNAc...) asparagine glycan.

This sequence belongs to the glycosyl hydrolase 67 family.

The protein resides in the secreted. It carries out the reaction an alpha-D-glucuronoside + H2O = D-glucuronate + an alcohol. In terms of biological role, releases 4-O-methylglucuronic acid from xylan. In Hypocrea jecorina (Trichoderma reesei), this protein is Alpha-glucuronidase.